The chain runs to 99 residues: Putative RNA-binding protein RbpE (99 aa).

The 78-residue stretch at 2 to 79 (SIYVGNLSYS…RVLKVNKARP (78 aa)) folds into the RRM domain. The interval 78-99 (RPREEKGARSGGGSWSRNNGGY) is disordered. Residues 86–99 (RSGGGSWSRNNGGY) are compositionally biased toward gly residues.

The polypeptide is Putative RNA-binding protein RbpE (rbpE) (Nostoc sp. (strain PCC 7120 / SAG 25.82 / UTEX 2576)).